We begin with the raw amino-acid sequence, 231 residues long: Protein fmp52-2, mitochondrial (231 aa).

The N-terminal 46 residues, 1–46 (MTMTTAAVFGCTGAVGSQILATLLAIDTFPSVKTISRRLPNVQSPK), are a transit peptide targeting the mitochondrion.

The protein belongs to the FMP52 family.

The protein localises to the mitochondrion outer membrane. In Neosartorya fischeri (strain ATCC 1020 / DSM 3700 / CBS 544.65 / FGSC A1164 / JCM 1740 / NRRL 181 / WB 181) (Aspergillus fischerianus), this protein is Protein fmp52-2, mitochondrial (fmp522).